Here is a 937-residue protein sequence, read N- to C-terminus: Coiled-coil domain-containing protein 39 (937 aa).

4 coiled-coil regions span residues 16 to 137, 165 to 339, 365 to 615, and 664 to 816; these read AIPV…CQMN, QQDD…KKDI, EKTL…SQIR, and VIKA…LKQT. The disordered stretch occupies residues 866 to 937; it reads LPTARGPSSR…NIPKEKKLSK (72 aa). The segment covering 873–887 has biased composition (low complexity); it reads SSRSSSQSSSLSSFR. Phosphoserine occurs at positions 888 and 896. Residues 915-928 are compositionally biased toward low complexity; sequence NDSSRSASSGSNSN.

Belongs to the CCDC39 family. As to expression, strongly expressed in tissues rich in ciliated cells. Expressed in olfactory and vomeronasal sensory neurons and the respiratory epithelium. Expressed in node cells carrying motile cilia, in upper and lower airways, and in ependymal and choroid plexus cells.

It is found in the cytoplasm. The protein localises to the cytoskeleton. It localises to the cilium axoneme. Its function is as follows. Required for assembly of dynein regulatory complex (DRC) and inner dynein arm (IDA) complexes, which are responsible for ciliary beat regulation, thereby playing a central role in motility in cilia and flagella. Probably acts together with CCDC40 to form a molecular ruler that determines the 96 nanometer (nm) repeat length and arrangements of components in cilia and flagella. Not required for outer dynein arm complexes assembly. This Mus musculus (Mouse) protein is Coiled-coil domain-containing protein 39.